Consider the following 224-residue polypeptide: PKHD-type hydroxylase Shewmr4_3244 (224 aa).

In terms of domain architecture, Fe2OG dioxygenase spans 78–176 (QFYPPLFNRY…RTAAFMWLQS (99 aa)). Positions 96, 98, and 157 each coordinate Fe cation. Arg-167 contributes to the 2-oxoglutarate binding site.

Requires Fe(2+) as cofactor. L-ascorbate serves as cofactor.

In Shewanella sp. (strain MR-4), this protein is PKHD-type hydroxylase Shewmr4_3244.